Reading from the N-terminus, the 252-residue chain is MRAISSLAGPRALAAFGRNDIRGTYRDPLLVMLVIAPVIWTTGVALLTPLFTEMLARRYGFDLVGYYPLILTAFLLLTSIIVAGALAAFLVLDDVDAGTMTALRVTPVPLSVFFGYRAATVMVVTTIYVVATMSCSGILEPGLVSSLIPIGLVAGLSAVVTLLLILAVANNKIQGLAMVRALGMLIAGLPCLPWFISSNWNLAFGVLPPYWAAKAFWVASDHGTWWPYLVGGAVYNLAIVWVLFRRFRAKHA.

The next 6 helical transmembrane spans lie at 31 to 51 (VMLVIAPVIWTTGVALLTPLF), 69 to 89 (LILTAFLLLTSIIVAGALAAF), 119 to 139 (ATVMVVTTIYVVATMSCSGIL), 148 to 168 (IPIGLVAGLSAVVTLLLILAV), 176 to 196 (LAMVRALGMLIAGLPCLPWFI), and 224 to 244 (TWWPYLVGGAVYNLAIVWVLF).

In terms of assembly, the complex is composed of 2 ATP-binding proteins and 2 transmembrane proteins.

Its subcellular location is the cell membrane. Part of the ABC transporter complex involved in fluoroquinolones export. Probably responsible for the translocation of the substrate across the membrane. This chain is Fluoroquinolones export permease protein MT2760, found in Mycobacterium tuberculosis (strain CDC 1551 / Oshkosh).